Here is a 619-residue protein sequence, read N- to C-terminus: DBH-like monooxygenase protein 2 (619 aa).

The signal sequence occupies residues 1 to 21; it reads MACVLLFRLFLLLVLAAFSQG. Residues 22–594 are Extracellular-facing; it reads KRLGPTSPLR…LSGSNTATLR (573 aa). A DOMON domain is found at 40 to 156; sequence RAVFLRWDFD…DTMRVLAAYG (117 aa). Y209 is an active-site residue. Cystine bridges form between C211-C261 and C248-C271. The Cu cation site is built by H241 and H242. N250 carries N-linked (GlcNAc...) asparagine glycosylation. Residues H309, H390, and H392 each coordinate Cu cation. 2 cysteine pairs are disulfide-bonded: C366-C481 and C444-C466. H390 is a catalytic residue. N405 carries an N-linked (GlcNAc...) asparagine glycan. M465 contributes to the Cu cation binding site. An N-linked (GlcNAc...) asparagine glycan is attached at N477. The chain crosses the membrane as a helical span at residues 595 to 615; sequence PLPMIAVLFLQGSLSCLLAML. Over 616–619 the chain is Cytoplasmic; that stretch reads QTGV.

The protein belongs to the copper type II ascorbate-dependent monooxygenase family. Requires Cu(2+) as cofactor. Expressed at low levels in thymus and testis.

The protein resides in the membrane. The polypeptide is DBH-like monooxygenase protein 2 (Moxd2) (Mus musculus (Mouse)).